Consider the following 331-residue polypeptide: Glucokinase (331 aa).

Gly16 to Thr21 lines the ATP pocket.

This sequence belongs to the bacterial glucokinase family.

The protein resides in the cytoplasm. The enzyme catalyses D-glucose + ATP = D-glucose 6-phosphate + ADP + H(+). The chain is Glucokinase from Pseudomonas aeruginosa (strain LESB58).